A 252-amino-acid chain; its full sequence is Ribosomal RNA small subunit methyltransferase J (252 aa).

S-adenosyl-L-methionine is bound by residues Arg-101 to Asp-102, Glu-117 to Arg-118, Ser-153 to Ser-154, and Asp-171.

Belongs to the methyltransferase superfamily. RsmJ family.

The protein resides in the cytoplasm. It catalyses the reaction guanosine(1516) in 16S rRNA + S-adenosyl-L-methionine = N(2)-methylguanosine(1516) in 16S rRNA + S-adenosyl-L-homocysteine + H(+). In terms of biological role, specifically methylates the guanosine in position 1516 of 16S rRNA. This Salmonella schwarzengrund (strain CVM19633) protein is Ribosomal RNA small subunit methyltransferase J.